The following is a 140-amino-acid chain: Odorant-binding protein 10 (140 aa).

The signal sequence occupies residues 1-25 (MTSFRLANLTVFLVLLFCFMRGVHS).

This sequence belongs to the PBP/GOBP family. High-level expression in female mouth parts, particularly in the proboscis (at protein level). Low-level expression in female antenna (at protein level). Female salivary gland. Female chemosensory organs: antenna, palp and proboscis. Male antenna, wing and maxillary palp. Expressed at higher levels in male tissues compared to female tissues. Not detected in midgut.

The protein resides in the secreted. Functionally, involved in modulation of blood-feeding behavior and capacity in female mosquitoes. Required for normal oviposition. Required for normal fecundity and fertility of female mosquitoes. Required for normal expression of VGA1 gene, which encodes the egg yolk protein vitellogenin-A1. Required for normal female longevity when mosquitoes are maintained on regular sugar meal. In terms of biological role, (Microbial infection) Facilitates shedding of dengue virus type 2 particles into mosquito saliva. Does not affect dengue virus type 2 replication or infection prevalence in midgut and salivary glands at 14 days after blood feeding. Its function is as follows. (Microbial infection) Facilitates shedding of Zika virus particles into mosquito saliva. Does not affect Zika virus replication or infection prevalence in midgut and salivary glands at 14 days after blood feeding. The polypeptide is Odorant-binding protein 10 (Aedes aegypti (Yellowfever mosquito)).